The following is a 111-amino-acid chain: ATP-dependent Clp protease adapter protein ClpS (111 aa).

It belongs to the ClpS family. As to quaternary structure, binds to the N-terminal domain of the chaperone ClpA.

Involved in the modulation of the specificity of the ClpAP-mediated ATP-dependent protein degradation. This is ATP-dependent Clp protease adapter protein ClpS from Legionella pneumophila (strain Corby).